The following is a 536-amino-acid chain: Apoptosis inhibitor 5 homolog (536 aa).

The disordered stretch occupies residues 462–536; it reads ITFGEKAAAN…GYRNRRFNKY (75 aa). Over residues 472 to 487 the composition is skewed to basic and acidic residues; the sequence is GKDKDQEPEKKSRPSN. Polar residues predominate over residues 498 to 507; that stretch reads KYSNKVNQSY. A compositionally biased stretch (gly residues) spans 516–528; the sequence is RGGGGGGGSGGGY.

This sequence belongs to the API5 family.

It localises to the nucleus. Antiapoptotic factor. Also known to efficiently suppress E2F1-induced apoptosis. This chain is Apoptosis inhibitor 5 homolog, found in Drosophila melanogaster (Fruit fly).